We begin with the raw amino-acid sequence, 230 residues long: Sugar fermentation stimulation protein homolog (230 aa).

Belongs to the SfsA family.

This chain is Sugar fermentation stimulation protein homolog, found in Ruegeria pomeroyi (strain ATCC 700808 / DSM 15171 / DSS-3) (Silicibacter pomeroyi).